The chain runs to 689 residues: UvrABC system protein C (689 aa).

Residues 16–95 (TNPGVYRFRD…IKEFAPRFNI (80 aa)) enclose the GIY-YIG domain. A UVR domain is found at 208-243 (KPYIRELTRQMNEAAECMDFETAAARRDDVGALERV). The disordered stretch occupies residues 316 to 337 (LAPAASGRRRTARHGSEDVVGQ).

It belongs to the UvrC family. In terms of assembly, interacts with UvrB in an incision complex.

The protein resides in the cytoplasm. Functionally, the UvrABC repair system catalyzes the recognition and processing of DNA lesions. UvrC both incises the 5' and 3' sides of the lesion. The N-terminal half is responsible for the 3' incision and the C-terminal half is responsible for the 5' incision. This chain is UvrABC system protein C, found in Kocuria rhizophila (strain ATCC 9341 / DSM 348 / NBRC 103217 / DC2201).